We begin with the raw amino-acid sequence, 329 residues long: Probable carboxylesterase 13 (329 aa).

Position 1 is an N-acetylmethionine (Met1). Residues His81 to Gly83 carry the Involved in the stabilization of the negatively charged intermediate by the formation of the oxyanion hole motif. Residues Ser165, Asp269, and His302 contribute to the active site.

Belongs to the 'GDXG' lipolytic enzyme family. Expressed in flowers.

The enzyme catalyses a carboxylic ester + H2O = an alcohol + a carboxylate + H(+). Its function is as follows. Carboxylesterase acting on esters with varying acyl chain length. The polypeptide is Probable carboxylesterase 13 (CXE13) (Arabidopsis thaliana (Mouse-ear cress)).